The primary structure comprises 610 residues: F-box/LRR-repeat protein 4 (610 aa).

Positions 5–52 constitute an F-box domain; that stretch reads DRINNCLPEELILEIFRRLESKPNRDACSLVCKRWLSLERFSRTTLRI. LRR repeat units lie at residues 53–79, 124–149, 150–175, 178–200, 201–227, 228–253, 256–277, 278–303, 304–329, 330–355, 356–381, 382–407, 408–433, 434–459, 460–484, 485–510, 511–536, 537–562, and 563–588; these read GASF…HVDE, SSSL…SLIW, CPNV…DLQG, VGDQ…NLRF, CEGL…GVAA, SAKI…YLDS, IHDK…LKLQ, CVSV…ALYS, FQHF…TLSD, CYFV…EING, CHNI…ALLY, CQRI…HLVD, CSGI…HIRR, CYEI…SLRF, CDKV…NVSG, CNQI…DISV, LQNI…VLSH, CHHI…HMVY, and CPGI…LIEK. The segment at 88 to 125 is disordered; the sequence is LSPSPKRKRGRDSSSPSSSKRKKLTDKTHSGAENVESS.

This chain is F-box/LRR-repeat protein 4 (FBL4), found in Arabidopsis thaliana (Mouse-ear cress).